We begin with the raw amino-acid sequence, 338 residues long: Fructose-1,6-bisphosphatase class 1 (338 aa).

4 residues coordinate Mg(2+): Glu-90, Asp-112, Leu-114, and Asp-115. Substrate-binding positions include 115–118, Asn-207, and Lys-273; that span reads DGSS. Glu-279 contributes to the Mg(2+) binding site.

Belongs to the FBPase class 1 family. Homotetramer. It depends on Mg(2+) as a cofactor.

The protein resides in the cytoplasm. The catalysed reaction is beta-D-fructose 1,6-bisphosphate + H2O = beta-D-fructose 6-phosphate + phosphate. Its pathway is carbohydrate biosynthesis; gluconeogenesis. The protein is Fructose-1,6-bisphosphatase class 1 of Stenotrophomonas maltophilia (strain R551-3).